A 302-amino-acid polypeptide reads, in one-letter code: Deoxyhypusine hydroxylase (302 aa).

HEAT-like PBS-type repeat units follow at residues 23–49 (ERFRALFTLKNIGGGAAIEAISKAFDD), 54–80 (LKHELAYCLGQMQDAQALDILTKVLKD), 87–113 (VRHEAAEAMGAIGHPDVLPILEEYKQD), 175–201 (DRYRAMFSLRNLRTEESVLAIAEGLKD), 206–232 (FRHEVAFVLGQLQEPCSIPFLQENLED), and 239–265 (VRHECAEALGAIATEDCIQILNRYAED). Fe cation contacts are provided by His56, Glu57, His89, and Glu90. 4 residues coordinate Fe cation: His208, Glu209, His241, and Glu242.

It belongs to the deoxyhypusine hydroxylase family. Fe(2+) serves as cofactor.

The protein localises to the endoplasmic reticulum membrane. It catalyses the reaction [eIF5A protein]-deoxyhypusine + AH2 + O2 = [eIF5A protein]-hypusine + A + H2O. It functions in the pathway protein modification; eIF5A hypusination. Functionally, catalyzes the hydroxylation of the N(6)-(4-aminobutyl)-L-lysine intermediate to form hypusine, an essential post-translational modification only found in mature eIF-5A factor. Essential for organismal viability and plays a role in a wide number of important processes such as cell growth and proliferation, and regulates induction of autophagy and protein synthesis. Has a role in eIF-5A-mediated translational control. The chain is Deoxyhypusine hydroxylase from Drosophila melanogaster (Fruit fly).